Consider the following 163-residue polypeptide: MSKTRVIYPGTFDPITNGHVDLVTRASRMFDEVVVAIAIGHHKNPLFSLEERVALAQSSLGHLSNVEFVGFDGLLVNFFKEQKATAVLRGLRAVSDFEYEFQLANMNRQLDPHFEAVFLTPSEQYSFISSTLIREIARLKGDVTKFVPQAVVEAFERKHQQGW.

Thr11 lines the substrate pocket. ATP contacts are provided by residues 11-12 (TF) and His19. Substrate-binding residues include Lys43, Leu75, and Arg89. ATP contacts are provided by residues 90–92 (GLR), Glu100, and 125–131 (YSFISST).

This sequence belongs to the bacterial CoaD family. As to quaternary structure, homohexamer. The cofactor is Mg(2+).

The protein localises to the cytoplasm. It carries out the reaction (R)-4'-phosphopantetheine + ATP + H(+) = 3'-dephospho-CoA + diphosphate. Its pathway is cofactor biosynthesis; coenzyme A biosynthesis; CoA from (R)-pantothenate: step 4/5. In terms of biological role, reversibly transfers an adenylyl group from ATP to 4'-phosphopantetheine, yielding dephospho-CoA (dPCoA) and pyrophosphate. The polypeptide is Phosphopantetheine adenylyltransferase (Acinetobacter baumannii (strain ACICU)).